The primary structure comprises 456 residues: Protein odr-4 homolog (456 aa).

Low complexity predominate over residues 374-401 (IESSKNNNNNNNNNNNNNNNNNNNNSKL). Residues 374-403 (IESSKNNNNNNNNNNNNNNNNNNNNSKLSN) form a disordered region. A helical membrane pass occupies residues 436 to 456 (YLIIIISVLVLMVAFYFKFFV).

This sequence belongs to the ODR-4 family.

The protein resides in the membrane. Functionally, may play a role in the trafficking of a subset of G-protein coupled receptors. The chain is Protein odr-4 homolog from Dictyostelium discoideum (Social amoeba).